We begin with the raw amino-acid sequence, 101 residues long: Small ribosomal subunit protein uS14 (101 aa).

The protein belongs to the universal ribosomal protein uS14 family. Part of the 30S ribosomal subunit. Contacts proteins S3 and S10.

Binds 16S rRNA, required for the assembly of 30S particles and may also be responsible for determining the conformation of the 16S rRNA at the A site. This chain is Small ribosomal subunit protein uS14, found in Shewanella baltica (strain OS155 / ATCC BAA-1091).